Consider the following 175-residue polypeptide: Ribonuclease M5 (175 aa).

Residues 3-83 (NEIIIVEGKS…DVDVFNAFVS (81 aa)) enclose the Toprim domain. Residues Glu-9, Asp-57, and Asp-59 each coordinate Mg(2+).

This sequence belongs to the ribonuclease M5 family. The cofactor is Mg(2+).

The protein localises to the cytoplasm. The enzyme catalyses Endonucleolytic cleavage of RNA, removing 21 and 42 nucleotides, respectively, from the 5'- and 3'-termini of a 5S-rRNA precursor.. Required for correct processing of both the 5' and 3' ends of 5S rRNA precursor. Cleaves both sides of a double-stranded region yielding mature 5S rRNA in one step. In Mesoplasma florum (strain ATCC 33453 / NBRC 100688 / NCTC 11704 / L1) (Acholeplasma florum), this protein is Ribonuclease M5.